We begin with the raw amino-acid sequence, 36 residues long: uncharacterized protein (36 aa).

This is an uncharacterized protein from Haemophilus influenzae (strain ATCC 51907 / DSM 11121 / KW20 / Rd).